The following is a 442-amino-acid chain: Na(+)/H(+) antiporter NhaA (442 aa).

Transmembrane regions (helical) follow at residues 32 to 52, 73 to 93, 111 to 131, 139 to 159, 170 to 190, 193 to 213, 234 to 254, 284 to 304, 316 to 336, 352 to 372, and 383 to 403; these read IGGG…NSPW, LTLA…VAGL, AVPV…YALV, AGWA…LAVI, FLLT…AVVY, HLSI…TLLV, VHAS…AVPV, VAVP…LSGL, VVLG…FLVA, VLGL…IGEL, and HVKI…AVVL. Positions 423 to 435 are enriched in basic and acidic residues; sequence HDGIPDVYQDLHR. A disordered region spans residues 423–442; it reads HDGIPDVYQDLHRSSPRPWG.

This sequence belongs to the NhaA Na(+)/H(+) (TC 2.A.33) antiporter family.

It localises to the cell membrane. The catalysed reaction is Na(+)(in) + 2 H(+)(out) = Na(+)(out) + 2 H(+)(in). In terms of biological role, na(+)/H(+) antiporter that extrudes sodium in exchange for external protons. This chain is Na(+)/H(+) antiporter NhaA, found in Frankia casuarinae (strain DSM 45818 / CECT 9043 / HFP020203 / CcI3).